A 252-amino-acid polypeptide reads, in one-letter code: Flap endonuclease Xni (252 aa).

Residue Asp105 participates in Mg(2+) binding. A 5'-3' exonuclease domain is found at 162–250 (ERTQFIDYLA…LNANLSQFRL (89 aa)). The K(+) site is built by Leu172, Ala173, Pro181, Val183, and Ile186. The interval 185 to 190 (GIGPKS) is interaction with DNA.

The protein belongs to the Xni family. Requires Mg(2+) as cofactor. K(+) serves as cofactor.

Its function is as follows. Has flap endonuclease activity. During DNA replication, flap endonucleases cleave the 5'-overhanging flap structure that is generated by displacement synthesis when DNA polymerase encounters the 5'-end of a downstream Okazaki fragment. The protein is Flap endonuclease Xni of Shewanella woodyi (strain ATCC 51908 / MS32).